The chain runs to 214 residues: Probable nicotinate-nucleotide adenylyltransferase (214 aa).

The protein belongs to the NadD family.

The catalysed reaction is nicotinate beta-D-ribonucleotide + ATP + H(+) = deamido-NAD(+) + diphosphate. Its pathway is cofactor biosynthesis; NAD(+) biosynthesis; deamido-NAD(+) from nicotinate D-ribonucleotide: step 1/1. Its function is as follows. Catalyzes the reversible adenylation of nicotinate mononucleotide (NaMN) to nicotinic acid adenine dinucleotide (NaAD). The sequence is that of Probable nicotinate-nucleotide adenylyltransferase from Mycobacterium bovis (strain ATCC BAA-935 / AF2122/97).